A 260-amino-acid chain; its full sequence is 3'-5' ssDNA/RNA exonuclease TatD (260 aa).

3 residues coordinate a divalent metal cation: E91, H127, and H152.

This sequence belongs to the metallo-dependent hydrolases superfamily. TatD-type hydrolase family. TatD subfamily. Monomer. Mg(2+) is required as a cofactor.

The protein localises to the cytoplasm. 3'-5' exonuclease that prefers single-stranded DNA and RNA. May play a role in the H(2)O(2)-induced DNA damage repair. The polypeptide is 3'-5' ssDNA/RNA exonuclease TatD (Enterobacter sp. (strain 638)).